Here is a 128-residue protein sequence, read N- to C-terminus: uncharacterized protein (128 aa).

The first 24 residues, 1–24, serve as a signal peptide directing secretion; sequence MKMTKLTTLLLTATLGLASGAALA. Low complexity-rich tracts occupy residues 24 to 44 and 52 to 70; these read AAESNAQSSNGQANSAANAGQ and NVAPNDVNNNDINTNGNTN. Residues 24–128 are disordered; sequence AAESNAQSSN…VNTKTDGTTQ (105 aa). Residues 71-82 show a composition bias toward polar residues; that stretch reads STMQHPDGSTMN. Positions 85–110 are enriched in basic and acidic residues; it reads GMTKDEEHKNTMCKDGRCPDINKKVE. Over residues 113–128 the composition is skewed to polar residues; sequence NGVNNDVNTKTDGTTQ.

This is an uncharacterized protein from Salmonella typhi.